The sequence spans 164 residues: V-type proton ATPase subunit c3 (164 aa).

Topologically, residues 1-11 (MSTFSGDETAP) are lumenal. Residues 12 to 32 (FFGFLGAAAALVFSCMGAAYG) traverse the membrane as a helical segment. Topologically, residues 33–54 (TAKSGVGVASMGVMRPELVMKS) are cytoplasmic. A helical transmembrane segment spans residues 55–75 (IVPVVMAGVLGIYGLIIAVII). Residues 76 to 94 (STGINPKAKSYYLFDGYAH) are Lumenal-facing. Residues 95–116 (LSSGLACGLAGLSAGMAIGIVG) form a helical membrane-spanning segment. Over 117–128 (DAGVRANAQQPK) the chain is Cytoplasmic. The helical transmembrane segment at 129–154 (LFVGMILILIFAEALALYGLIVGIIL) threads the bilayer. The Lumenal portion of the chain corresponds to 155-164 (SSRAGQSRAE).

The protein belongs to the V-ATPase proteolipid subunit family. In terms of assembly, V-ATPase is a heteromultimeric enzyme composed of a peripheral catalytic V1 complex (components A to H) attached to an integral membrane V0 proton pore complex (components: a, c, c'', d and e). The proteolipid components c and c'' are present as a hexameric ring that forms the proton-conducting pore. Expressed in leaf, root, flower and silique.

The protein resides in the vacuole membrane. Its function is as follows. Proton-conducting pore forming subunit of the membrane integral V0 complex of vacuolar ATPase. V-ATPase is responsible for acidifying a variety of intracellular compartments in eukaryotic cells. The protein is V-type proton ATPase subunit c3 (VHA-c3) of Arabidopsis thaliana (Mouse-ear cress).